The sequence spans 142 residues: MYKTIIMPVDVFEMELSDKAIRHAEFLAQQDGVIHLLHVLPGSASMSLHRFAADVRRFEEHLQHEAETRLQTMVGHFSIDPSRIKTHVRFGSVRDVVNEMGEELDADVVVIGSRNPSITTHLLGSNASSVVRHATLPVLVVR.

This sequence belongs to the universal stress protein A family.

The protein is Universal stress protein G (uspG) of Salmonella typhi.